A 236-amino-acid chain; its full sequence is Aspartate/glutamate leucyltransferase (236 aa).

Belongs to the R-transferase family. Bpt subfamily.

It localises to the cytoplasm. It catalyses the reaction N-terminal L-glutamyl-[protein] + L-leucyl-tRNA(Leu) = N-terminal L-leucyl-L-glutamyl-[protein] + tRNA(Leu) + H(+). The enzyme catalyses N-terminal L-aspartyl-[protein] + L-leucyl-tRNA(Leu) = N-terminal L-leucyl-L-aspartyl-[protein] + tRNA(Leu) + H(+). Its function is as follows. Functions in the N-end rule pathway of protein degradation where it conjugates Leu from its aminoacyl-tRNA to the N-termini of proteins containing an N-terminal aspartate or glutamate. In Halorhodospira halophila (strain DSM 244 / SL1) (Ectothiorhodospira halophila (strain DSM 244 / SL1)), this protein is Aspartate/glutamate leucyltransferase.